Here is a 130-residue protein sequence, read N- to C-terminus: Large ribosomal subunit protein bL12 (130 aa).

This sequence belongs to the bacterial ribosomal protein bL12 family. As to quaternary structure, homodimer. Part of the ribosomal stalk of the 50S ribosomal subunit. Forms a multimeric L10(L12)X complex, where L10 forms an elongated spine to which 2 to 4 L12 dimers bind in a sequential fashion. Binds GTP-bound translation factors.

Its function is as follows. Forms part of the ribosomal stalk which helps the ribosome interact with GTP-bound translation factors. Is thus essential for accurate translation. The sequence is that of Large ribosomal subunit protein bL12 from Mycobacterium leprae (strain TN).